The following is a 388-amino-acid chain: Succinate--CoA ligase [ADP-forming] subunit beta (388 aa).

One can recognise an ATP-grasp domain in the interval 9-244 (KEILRKYGVT…LDEEDPAEIE (236 aa)). Residues K46, 53 to 55 (GRG), E99, A102, and E107 each bind ATP. Mg(2+) is bound by residues N199 and D213. Residues N264 and 321 to 323 (GIM) contribute to the substrate site.

The protein belongs to the succinate/malate CoA ligase beta subunit family. In terms of assembly, heterotetramer of two alpha and two beta subunits. Requires Mg(2+) as cofactor.

The catalysed reaction is succinate + ATP + CoA = succinyl-CoA + ADP + phosphate. It catalyses the reaction GTP + succinate + CoA = succinyl-CoA + GDP + phosphate. It functions in the pathway carbohydrate metabolism; tricarboxylic acid cycle; succinate from succinyl-CoA (ligase route): step 1/1. Succinyl-CoA synthetase functions in the citric acid cycle (TCA), coupling the hydrolysis of succinyl-CoA to the synthesis of either ATP or GTP and thus represents the only step of substrate-level phosphorylation in the TCA. The beta subunit provides nucleotide specificity of the enzyme and binds the substrate succinate, while the binding sites for coenzyme A and phosphate are found in the alpha subunit. This Janthinobacterium sp. (strain Marseille) (Minibacterium massiliensis) protein is Succinate--CoA ligase [ADP-forming] subunit beta.